A 180-amino-acid polypeptide reads, in one-letter code: Large ribosomal subunit protein uL5 (180 aa).

It belongs to the universal ribosomal protein uL5 family. In terms of assembly, part of the 50S ribosomal subunit; part of the 5S rRNA/L5/L18/L25 subcomplex. Contacts the 5S rRNA and the P site tRNA. Forms a bridge to the 30S subunit in the 70S ribosome.

Its function is as follows. This is one of the proteins that bind and probably mediate the attachment of the 5S RNA into the large ribosomal subunit, where it forms part of the central protuberance. In the 70S ribosome it contacts protein S13 of the 30S subunit (bridge B1b), connecting the 2 subunits; this bridge is implicated in subunit movement. Contacts the P site tRNA; the 5S rRNA and some of its associated proteins might help stabilize positioning of ribosome-bound tRNAs. The sequence is that of Large ribosomal subunit protein uL5 from Limosilactobacillus fermentum (strain NBRC 3956 / LMG 18251) (Lactobacillus fermentum).